We begin with the raw amino-acid sequence, 70 residues long: Small, acid-soluble spore protein 1 (70 aa).

This sequence belongs to the alpha/beta-type SASP family.

Functionally, SASP are bound to spore DNA. They are double-stranded DNA-binding proteins that cause DNA to change to an a-like conformation. They protect the DNA backbone from chemical and enzymatic cleavage and are thus involved in dormant spore's high resistance to UV light. The sequence is that of Small, acid-soluble spore protein 1 (sasP-1) from Bacillus cereus.